The following is a 55-amino-acid chain: ATP synthase protein 8 (55 aa).

The chain crosses the membrane as a helical span at residues 7–24; it reads NPWFFIMIISWLTYSMII. The tract at residues 34 to 55 is disordered; the sequence is TNPPARKEPTTNTTTPWNWPWT. Over residues 43–55 the composition is skewed to low complexity; it reads TTNTTTPWNWPWT.

Belongs to the ATPase protein 8 family. F-type ATPases have 2 components, CF(1) - the catalytic core - and CF(0) - the membrane proton channel.

It localises to the mitochondrion membrane. Functionally, mitochondrial membrane ATP synthase (F(1)F(0) ATP synthase or Complex V) produces ATP from ADP in the presence of a proton gradient across the membrane which is generated by electron transport complexes of the respiratory chain. F-type ATPases consist of two structural domains, F(1) - containing the extramembraneous catalytic core and F(0) - containing the membrane proton channel, linked together by a central stalk and a peripheral stalk. During catalysis, ATP synthesis in the catalytic domain of F(1) is coupled via a rotary mechanism of the central stalk subunits to proton translocation. Part of the complex F(0) domain. Minor subunit located with subunit a in the membrane. In Vireo altiloquus (Black-whiskered vireo), this protein is ATP synthase protein 8 (MT-ATP8).